The chain runs to 191 residues: Cell division protein SepF (191 aa).

Over residues 153 to 178 (FPEEASPSNVSSKKTSQYKFETNTTP) the composition is skewed to polar residues. The segment at 153–191 (FPEEASPSNVSSKKTSQYKFETNTTPEPAWGESKLSAYN) is disordered.

It belongs to the SepF family. In terms of assembly, homodimer. Interacts with FtsZ.

It localises to the cytoplasm. Its function is as follows. Cell division protein that is part of the divisome complex and is recruited early to the Z-ring. Probably stimulates Z-ring formation, perhaps through the cross-linking of FtsZ protofilaments. Its function overlaps with FtsA. In Prochlorococcus marinus subsp. pastoris (strain CCMP1986 / NIES-2087 / MED4), this protein is Cell division protein SepF.